Reading from the N-terminus, the 439-residue chain is Microfibrillar-associated protein 1 (439 aa).

Residues 1–17 (MSVPSSLMKQPPIQSTA) show a composition bias toward polar residues. Residues 1 to 200 (MSVPSSLMKQ…SEDEMEPRLK (200 aa)) form a disordered region. Serine 2 carries the post-translational modification N-acetylserine. Residues 23 to 34 (RNEKGEISMEKV) show a composition bias toward basic and acidic residues. Residues serine 52 and serine 53 each carry the phosphoserine modification. A compositionally biased stretch (basic and acidic residues) spans 61–70 (QFIKKAKEQE). Residue lysine 67 forms a Glycyl lysine isopeptide (Lys-Gly) (interchain with G-Cter in SUMO2) linkage. Over residues 71–81 (AEPEEQEEDSS) the composition is skewed to acidic residues. Phosphoserine occurs at positions 94, 116, 118, 132, and 133. Composition is skewed to acidic residues over residues 112–122 (VVGESDSEVEG) and 131–144 (DSSEEEEEEIDEEE). The segment covering 145–163 (IERRRGMMRQRAQERKNEE) has biased composition (basic and acidic residues). Acidic residues predominate over residues 178–195 (ESESESEYEEYTDSEDEM). Lysine 249 participates in a covalent cross-link: Glycyl lysine isopeptide (Lys-Gly) (interchain with G-Cter in SUMO2). Threonine 267 carries the post-translational modification Phosphothreonine. A Glycyl lysine isopeptide (Lys-Gly) (interchain with G-Cter in SUMO2) cross-link involves residue lysine 357. A Phosphoserine modification is found at serine 361. Residues lysine 371, lysine 381, lysine 415, and lysine 418 each participate in a glycyl lysine isopeptide (Lys-Gly) (interchain with G-Cter in SUMO2) cross-link. Serine 432 is subject to Phosphoserine.

It belongs to the MFAP1 family. As to quaternary structure, component of the spliceosome B complex. Interacts with PRPF38A (via N-terminal interaction domain).

Its subcellular location is the nucleus. In terms of biological role, involved in pre-mRNA splicing as a component of the spliceosome. This is Microfibrillar-associated protein 1 from Bos taurus (Bovine).